A 610-amino-acid polypeptide reads, in one-letter code: GATOR complex protein NPRL3 (610 aa).

Residue Ser437 is modified to Phosphoserine. The tract at residues 474-501 (REASEDHSSLASDNIAVQPSSSHKSNFS) is disordered. Polar residues predominate over residues 482-501 (SLASDNIAVQPSSSHKSNFS).

The protein belongs to the NPR3 family. Component of the GATOR complex consisting of mio, Nup44A/Seh1, Im11, Nplr3, Nplr2, Wdr24, Wdr59 and Sec13. Within the GATOR complex, probable component of the GATOR1 subcomplex which is likely composed of Iml1, Nplr2 and Nplr3. Interacts with Nprl2.

The protein localises to the cytoplasm. It is found in the lysosome. Functionally, an essential component of the GATOR subcomplex GATOR1 which functions as an inhibitor of the amino acid-sensing branch of the TORC1 signaling pathway. The two GATOR subcomplexes, GATOR1 and GATOR2, regulate the TORC1 pathway in order to mediate metabolic homeostasis, female gametogenesis and the response to amino acid limitation and complete starvation. The function of GATOR1 in negatively regulating the TORC1 pathway is essential for maintaining baseline levels of TORC1 activity under nutrient rich conditions, and for promoting survival during amino acid or complete starvation by inhibiting TORC1-dependent cell growth and promoting catabolic metabolism and autophagy. In addition, this inhibition of TORC1 is necessary to maintain female fertility under normal conditions and during periods of nutrient stress. GATOR1 and GATOR2 act at different stages of oogenesis to regulate TORC1 in order to control meiotic entry and promote oocyte growth and development. After exactly four mitotic cyst divisions, the GATOR1 complex members (Iml1, Nprl2 and Nprl3) down-regulate TORC1 to slow cellular metabolism and promote the mitotic/meiotic transition. At later stages of oogenesis, the mio and Nup44A components of the GATOR2 complex inhibit GATOR1 and thus activate TORC1 to promote meiotic progression, and drive oocyte growth and development. This chain is GATOR complex protein NPRL3, found in Drosophila melanogaster (Fruit fly).